We begin with the raw amino-acid sequence, 90 residues long: ESAT-6-like protein EsxE (90 aa).

Belongs to the WXG100 family. ESAT-6 subfamily.

It is found in the secreted. This Mycobacterium tuberculosis (strain CDC 1551 / Oshkosh) protein is ESAT-6-like protein EsxE.